We begin with the raw amino-acid sequence, 161 residues long: Protein-export protein SecB (161 aa).

Belongs to the SecB family. As to quaternary structure, homotetramer, a dimer of dimers. One homotetramer interacts with 1 SecA dimer.

It localises to the cytoplasm. One of the proteins required for the normal export of preproteins out of the cell cytoplasm. It is a molecular chaperone that binds to a subset of precursor proteins, maintaining them in a translocation-competent state. It also specifically binds to its receptor SecA. In Coxiella burnetii (strain Dugway 5J108-111), this protein is Protein-export protein SecB.